We begin with the raw amino-acid sequence, 541 residues long: Membrane protein insertase YidC (541 aa).

Transmembrane regions (helical) follow at residues 7–27 (FLIVAIFLSVFLLWDKWGVTH), 289–309 (YLLTVVNPELVIAPGAIVTLP), 356–376 (IIHSWGYSIITLTLLIKLAFY), 430–450 (LPILVQIPVFISLYWVLLEMV), 463–483 (LSAQDPYYILPLIMGVSMFAQ), and 498–518 (IMMALPFVFTIFFLWFPSGLV).

It belongs to the OXA1/ALB3/YidC family. Type 1 subfamily. Interacts with the Sec translocase complex via SecD. Specifically interacts with transmembrane segments of nascent integral membrane proteins during membrane integration.

Its subcellular location is the cell inner membrane. In terms of biological role, required for the insertion and/or proper folding and/or complex formation of integral membrane proteins into the membrane. Involved in integration of membrane proteins that insert both dependently and independently of the Sec translocase complex, as well as at least some lipoproteins. Aids folding of multispanning membrane proteins. The chain is Membrane protein insertase YidC from Ruthia magnifica subsp. Calyptogena magnifica.